A 407-amino-acid chain; its full sequence is uncharacterized protein (407 aa).

The 250-residue stretch at M1–L250 folds into the EAL domain.

This is an uncharacterized protein from Bacillus subtilis (strain 168).